A 474-amino-acid polypeptide reads, in one-letter code: Transmembrane transporter FVEG_12640 (474 aa).

Polar residues predominate over residues 1 to 15 (MASPTISSMEQYTPS). Residues 1–39 (MASPTISSMEQYTPSSKDEKIVPLHGDAAGSDTEKGESR) form a disordered region. 10 helical membrane passes run 72 to 92 (ILAI…LCIV), 133 to 153 (LVGV…IVTS), 164 to 184 (GTCT…FSSI), 192 to 212 (WLTW…VVAV), 231 to 251 (WAPI…NIFI), 275 to 295 (ACLV…LVIY), 317 to 337 (VAYG…QHVA), 364 to 384 (LGIN…VPIL), 387 to 407 (LLGL…PALL), and 431 to 451 (LIMI…AVLI).

The protein belongs to the amino acid/polyamine transporter 2 family.

The protein resides in the membrane. Transmembrane transporter; part of the Fusarium detoxification of benzoxazolinone cluster 2 (FDB2) involved in the degradation of benzoxazolinones produced by the host plant. Maize, wheat, and rye produce the 2 benzoxazinone phytoanticipins 2,4-dihy-droxy-7-methoxy-1,4-benzoxazin-3-one (DIMBOA) and 2,4-dihydroxy-1,4-benzoxazin-3-one (DIBOA) that, due to their inherent instability once released, spontaneously degrade to the more stable corresponding benzoxazolinones, 6-methoxy-2-benzoxazolinone (MBOA) and 2-benzoxazolinone (BOA), respectively. Might be involved in the transport of metabolites of benzoxazolinone degradation. This chain is Transmembrane transporter FVEG_12640, found in Gibberella moniliformis (strain M3125 / FGSC 7600) (Maize ear and stalk rot fungus).